Reading from the N-terminus, the 138-residue chain is Ribonuclease VapC21 (138 aa).

In terms of domain architecture, PINc spans 6-128; it reads LLDKSAAYRA…ERIAAITRQP (123 aa). Mg(2+) contacts are provided by Asp-8 and Asp-97.

Belongs to the PINc/VapC protein family. The cofactor is Mg(2+).

Toxic component of a type II toxin-antitoxin (TA) system. An RNase. Its toxic effect is neutralized by coexpression with cognate antitoxin VapB21. The protein is Ribonuclease VapC21 of Mycobacterium tuberculosis (strain CDC 1551 / Oshkosh).